The chain runs to 706 residues: MMSKCSSHNSLYALILLAQYHNITVNAETIRHQYNTHTQDFGVTEWLLAAKSIGLKAKYVEKHFSRLSIISLPALIWRDDGKHYILSRITKDSSRYLVYDPEQHQSLTFSRDEFEKLYQGKVILVTSRATVVGELAKFDFSWFIPSVVKYRRILLEVLTVSAFIQFLALITPLFFQVVMDKVLVHRGFSTLNIITIAFIIVILFEVILTGARTYIFSHTTSRIDVELGAKLFRHLLALPVSYFENRRVGETVARVRELEQIRNFLTGQALTSVLDLFFSVIFFCVMWYYSPQLTLVILLSLPCYVIWSLFISPLLRRRLDDKFLRNAENQAFLVETVTAINTIKSMAVSPQMIATWDKQLAGYVASSFRVNLVAMTGQQGIQLIQKSVMVISLWMGAHLVISGEISIGQLIAFNMLAGQVIAPVIRLAHLWQDFQQVGISVERLGDVLNTPVEKKSGRNILPEIQGDIEFKNVRFRYSSDGNVILNNINLYISKGDVIGIVGRSGSGKSTLTKLLQRFYIPETGQILIDGHDLSLADPEWLRRQIGVVLQENILLNRSIIDNITLASPAVSMEQAIEAARLAGAHDFIRELKEGYNTIVGEQGVGLSGGQRQRIAIARALVTNPRILIFDEATSALDYESENIIMKNMSRICKNRTVIIIAHRLSTVKNANRIIVMDNGFISEDGTHKELISKKDSLYAYLYQLQA.

The region spanning 1 to 125 (MMSKCSSHNS…KLYQGKVILV (125 aa)) is the Peptidase C39 domain. Histidine 83 is an active-site residue. The next 5 membrane-spanning stretches (helical) occupy residues 153–173 (ILLE…ITPL), 191–211 (LNII…LTGA), 269–289 (ALTS…MWYY), 295–315 (LVIL…SPLL), and 388–408 (VMVI…ISIG). In terms of domain architecture, ABC transmembrane type-1 spans 154–436 (LLEVLTVSAF…LAHLWQDFQQ (283 aa)). An ABC transporter domain is found at 468-703 (IEFKNVRFRY…KDSLYAYLYQ (236 aa)). ATP is bound at residue 502-509 (GRSGSGKS).

Belongs to the ABC transporter superfamily. Protein-1 exporter (TC 3.A.1.109) family. As to quaternary structure, homodimer.

Its subcellular location is the cell inner membrane. In terms of biological role, part of the ABC transporter complex HlyBD involved in hemolysin export. Transmembrane domains (TMD) form a pore in the inner membrane and the ATP-binding domain (NBD) is responsible for energy generation. In Escherichia coli O157:H7, this protein is Alpha-hemolysin translocation ATP-binding protein HlyB (hlyB).